The following is a 262-amino-acid chain: Short-chain Z-isoprenyl diphosphate synthase (262 aa).

Residue Asp-40 is part of the active site. Asp-40 lines the Mg(2+) pocket. Residues 41 to 44, Trp-45, and 86 to 88 each bind substrate; these read GNRR and STE. Asn-89 (proton acceptor) is an active-site residue. Residues Arg-92, Arg-211, and 217–219 contribute to the substrate site; that span reads RLS. Mg(2+) is bound at residue Glu-230.

Belongs to the UPP synthase family. Z-FPP synthase subfamily. Mg(2+) is required as a cofactor.

The enzyme catalyses isopentenyl diphosphate + (2E)-geranyl diphosphate = (2Z,6E)-farnesyl diphosphate + diphosphate. The protein operates within phospholipid metabolism; decaprenyl phosphate biosynthesis. In terms of biological role, generates Z-farnesyl diphosphate (Z-FPP) from isopentenyl pyrophosphate (IPP). Z-FPP is the precursor of decaprenyl diphosphate, which has a central role in the biosynthesis of the mycobacterial cell wall. This chain is Short-chain Z-isoprenyl diphosphate synthase, found in Mycobacterium leprae (strain TN).